Here is a 74-residue protein sequence, read N- to C-terminus: DNA gyrase inhibitor YacG (74 aa).

Residues C7, C10, C26, and C30 each contribute to the Zn(2+) site.

This sequence belongs to the DNA gyrase inhibitor YacG family. In terms of assembly, interacts with GyrB. Zn(2+) is required as a cofactor.

In terms of biological role, inhibits all the catalytic activities of DNA gyrase by preventing its interaction with DNA. Acts by binding directly to the C-terminal domain of GyrB, which probably disrupts DNA binding by the gyrase. This Shewanella denitrificans (strain OS217 / ATCC BAA-1090 / DSM 15013) protein is DNA gyrase inhibitor YacG.